Here is a 48-residue protein sequence, read N- to C-terminus: Putative ATP synthase protein 8-like protein (48 aa).

A helical membrane pass occupies residues 17 to 37 (GFLVILLTLLLLSYAFLSMIL).

It belongs to the ATPase protein 8 family.

The protein localises to the membrane. The polypeptide is Putative ATP synthase protein 8-like protein (Eremothecium gossypii (strain ATCC 10895 / CBS 109.51 / FGSC 9923 / NRRL Y-1056) (Yeast)).